A 142-amino-acid chain; its full sequence is Hydrogenase maturation factor HypA (142 aa).

H2 lines the Ni(2+) pocket. Zn(2+) contacts are provided by C73, C76, C109, and C112.

It belongs to the HypA/HybF family.

Functionally, involved in the maturation of [NiFe] hydrogenases. Required for nickel insertion into the metal center of the hydrogenase. The protein is Hydrogenase maturation factor HypA of Methanopyrus kandleri (strain AV19 / DSM 6324 / JCM 9639 / NBRC 100938).